Consider the following 336-residue polypeptide: Glutamyl endopeptidase (336 aa).

The N-terminal stretch at 1 to 29 is a signal peptide; that stretch reads MKGKFLKVSSLFVATLTTATLVSSPAANA. The propeptide occupies 30–68; it reads LSSKAMDNHPQQTQSSKQQTPKIQKGGNLKPLEQREHAN. Residues 34 to 61 are disordered; the sequence is AMDNHPQQTQSSKQQTPKIQKGGNLKPL. Low complexity predominate over residues 39–51; the sequence is PQQTQSSKQQTPK. Catalysis depends on charge relay system residues His119, Asp161, and Ser237. The segment at 283 to 336 is disordered; that stretch reads FANDDQPNNPDNPDNPNNPDNPNNPDEPNNPDNPNNPDNPDNGDTNNSDNPDAA. Over residues 286–336 the composition is skewed to low complexity; sequence DDQPNNPDNPDNPNNPDNPNNPDEPNNPDNPNNPDNPDNGDTNNSDNPDAA. 11 tandem repeats follow at residues 289–291, 292–294, 295–297, 298–300, 301–303, 304–306, 310–312, 313–315, 316–318, 319–321, and 322–324. The segment at 289 to 324 is 11 X 3 AA repeats of P-[DN]-N; it reads PNNPDNPDNPNNPDNPNNPDEPNNPDNPNNPDNPDN.

Belongs to the peptidase S1B family. In terms of processing, proteolytically cleaved by aureolysin (aur). This cleavage leads to the activation of SspA.

The protein resides in the secreted. The enzyme catalyses Preferential cleavage: Glu-|-Xaa, Asp-|-Xaa.. Preferentially cleaves peptide bonds on the carboxyl-terminal side of aspartate and glutamate. Along with other extracellular proteases it is involved in colonization and infection of human tissues. Required for proteolytic maturation of thiol protease SspB and inactivation of SspC, an inhibitor of SspB. It is the most important protease for degradation of fibronectin-binding protein (FnBP) and surface protein A, which are involved in adherence to host cells. May also protect bacteria against host defense mechanism by cleaving the immunoglobulin classes IgG, IgA and IgM. May be involved in the stability of secreted lipases. This is Glutamyl endopeptidase (sspA) from Staphylococcus aureus (strain COL).